The sequence spans 398 residues: Argininosuccinate synthase (398 aa).

Residue 10 to 18 coordinates ATP; it reads AYSGGLDTS. An L-citrulline-binding site is contributed by Y87. An ATP-binding site is contributed by G117. 3 residues coordinate L-aspartate: T119, N123, and D124. Residue N123 participates in L-citrulline binding. The L-citrulline site is built by R127, S175, E260, and Y272.

The protein belongs to the argininosuccinate synthase family. Type 1 subfamily. In terms of assembly, homotetramer.

The protein resides in the cytoplasm. The enzyme catalyses L-citrulline + L-aspartate + ATP = 2-(N(omega)-L-arginino)succinate + AMP + diphosphate + H(+). The protein operates within amino-acid biosynthesis; L-arginine biosynthesis; L-arginine from L-ornithine and carbamoyl phosphate: step 2/3. The polypeptide is Argininosuccinate synthase (Lactococcus lactis subsp. lactis (strain IL1403) (Streptococcus lactis)).